The primary structure comprises 392 residues: O-phospho-L-seryl-tRNA:Cys-tRNA synthase (392 aa).

Pyridoxal 5'-phosphate contacts are provided by residues 84-85 (AR), Asn-191, and 214-216 (SGH). Lys-217 bears the N6-(pyridoxal phosphate)lysine mark.

The protein belongs to the SepCysS family. Homodimer. Interacts with SepRS. It depends on pyridoxal 5'-phosphate as a cofactor.

It carries out the reaction O-phospho-L-seryl-tRNA(Cys) + hydrogen sulfide + H(+) = L-cysteinyl-tRNA(Cys) + phosphate. Functionally, converts O-phospho-L-seryl-tRNA(Cys) (Sep-tRNA(Cys)) to L-cysteinyl-tRNA(Cys) (Cys-tRNA(Cys)). The sequence is that of O-phospho-L-seryl-tRNA:Cys-tRNA synthase from Methanopyrus kandleri (strain AV19 / DSM 6324 / JCM 9639 / NBRC 100938).